Reading from the N-terminus, the 92-residue chain is C-C motif chemokine 4 (92 aa).

Positions 1 to 23 (MKLCVTVLSLLMLVAAFCSPALS) are cleaved as a signal peptide. Disulfide bonds link cysteine 34/cysteine 58 and cysteine 35/cysteine 74.

It belongs to the intercrine beta (chemokine CC) family. As to quaternary structure, homodimer and heterodimer of MIP-1-alpha(4-69) and MIP-1-beta(3-69). Post-translationally, N-terminal processed form MIP-1-beta(3-69) is produced by proteolytic cleavage after secretion from peripheral blood lymphocytes.

It is found in the secreted. Its function is as follows. Monokine with inflammatory and chemokinetic properties. Binds to CCR5. One of the major HIV-suppressive factors produced by CD8+ T-cells. Recombinant MIP-1-beta induces a dose-dependent inhibition of different strains of HIV-1, HIV-2, and simian immunodeficiency virus (SIV). The processed form MIP-1-beta(3-69) retains the abilities to induce down-modulation of surface expression of the chemokine receptor CCR5 and to inhibit the CCR5-mediated entry of HIV-1 in T-cells. MIP-1-beta(3-69) is also a ligand for CCR1 and CCR2 isoform B. The protein is C-C motif chemokine 4 (CCL4) of Homo sapiens (Human).